Consider the following 1585-residue polypeptide: Maestro heat-like repeat-containing protein family member 2B (1585 aa).

HEAT repeat units lie at residues 28–65 (VNKEDIYSHLTSVIQNTDILDDAIVQRLIYYASKDMRD), 228–263 (GYALGQVPWLLNQYKDKEIDFHVTQSLKQILTAAVL), 272–309 (LRRSIFINLLQQICRAPEPPVKENEMKASSCFLILAHS), 310–346 (NPGELMEFFDEQVRSNNEAIRVGILTLLRLAVNADEP), 405–445 (TLNR…LVIG), 531–569 (IGLLKILPEIIHPKLVDLWKTRLPELLQPLEGKNISTVL), 572–611 (TMLLQLLKESLWKISDVAWTIQLTQDFKQQMGSYSNNSTE), 662–699 (ENHLDIVLKVLKTFQNQEKFFMNRCKSLFSGKKSLTKT), 777–819 (SYKE…LKPQ), 964–1001 (HLEVERLQGLQEGLESDDVQVQIKISSKIAKIVSKFIP), 1021–1059 (PTCTKACGIWMITVLKQQGAALEDQLLEILGTIYHHMPV), 1112–1151 (ASSGKLLQALIDKLETELEDDIARVEAISVACAMYEVISM), 1157–1195 (GLYPELFTLLLKLVSCTLGQKMLTCPWSHRRHVMQQGEQ), 1258–1295 (GVILDIMEQLLSSLTSSSENYRITGAAFFSELMKEPIL), and 1363–1402 (CESLKALKKILELLTDRDVSFYFKEIVLQTRTFFEDEQDD).

In terms of assembly, found in a complex at least composed of MROH2B, PRKACA isoform 2 and TCP11. Interacts with PRKACA. Interacts with TCP11. Constitutively phosphorylated on serine and threonine residues in acrosomal region of the sperm head, midpiece and flagellar regions of noncapacitated spermatozoa. Phosphorylation on tyrosine residues increases upon sperm capacitation within the acrosomal and tail regions in a protein kinase A (PKA)-dependent signaling pathway.

It is found in the cytoplasm. Its subcellular location is the cytoplasmic vesicle. It localises to the secretory vesicle. The protein localises to the acrosome. The protein resides in the cell projection. It is found in the cilium. Its subcellular location is the flagellum. In terms of biological role, may play a role in the process of sperm capacitation. The polypeptide is Maestro heat-like repeat-containing protein family member 2B (Homo sapiens (Human)).